Consider the following 340-residue polypeptide: Ketol-acid reductoisomerase (NADP(+)) (340 aa).

Positions 3 to 183 (INVFYDKDCN…GGGRTGIIET (181 aa)) constitute a KARI N-terminal Rossmann domain. Residues 26-29 (FGSQ), Arg49, Ser54, and 84-87 (DENQ) contribute to the NADP(+) site. The active site involves His109. Gly135 is a binding site for NADP(+). Residues 184–329 (TFKDETETDL…VKLRNMMPWI (146 aa)) form the KARI C-terminal knotted domain. Mg(2+)-binding residues include Asp192, Glu196, Glu228, and Glu232. Ser253 serves as a coordination point for substrate.

This sequence belongs to the ketol-acid reductoisomerase family. Mg(2+) is required as a cofactor.

It catalyses the reaction (2R)-2,3-dihydroxy-3-methylbutanoate + NADP(+) = (2S)-2-acetolactate + NADPH + H(+). The enzyme catalyses (2R,3R)-2,3-dihydroxy-3-methylpentanoate + NADP(+) = (S)-2-ethyl-2-hydroxy-3-oxobutanoate + NADPH + H(+). The protein operates within amino-acid biosynthesis; L-isoleucine biosynthesis; L-isoleucine from 2-oxobutanoate: step 2/4. Its pathway is amino-acid biosynthesis; L-valine biosynthesis; L-valine from pyruvate: step 2/4. Involved in the biosynthesis of branched-chain amino acids (BCAA). Catalyzes an alkyl-migration followed by a ketol-acid reduction of (S)-2-acetolactate (S2AL) to yield (R)-2,3-dihydroxy-isovalerate. In the isomerase reaction, S2AL is rearranged via a Mg-dependent methyl migration to produce 3-hydroxy-3-methyl-2-ketobutyrate (HMKB). In the reductase reaction, this 2-ketoacid undergoes a metal-dependent reduction by NADPH to yield (R)-2,3-dihydroxy-isovalerate. The protein is Ketol-acid reductoisomerase (NADP(+)) of Aliarcobacter butzleri (strain RM4018) (Arcobacter butzleri).